We begin with the raw amino-acid sequence, 931 residues long: Protein translocase subunit SecA (931 aa).

Residues glutamine 87, 105-109, and aspartate 515 each bind ATP; that span reads GEGKT. 4 residues coordinate Zn(2+): cysteine 915, cysteine 917, cysteine 926, and histidine 927.

It belongs to the SecA family. As to quaternary structure, monomer and homodimer. Part of the essential Sec protein translocation apparatus which comprises SecA, SecYEG and auxiliary proteins SecDF-YajC and YidC. It depends on Zn(2+) as a cofactor.

The protein resides in the cell inner membrane. The protein localises to the cytoplasm. It catalyses the reaction ATP + H2O + cellular proteinSide 1 = ADP + phosphate + cellular proteinSide 2.. In terms of biological role, part of the Sec protein translocase complex. Interacts with the SecYEG preprotein conducting channel. Has a central role in coupling the hydrolysis of ATP to the transfer of proteins into and across the cell membrane, serving both as a receptor for the preprotein-SecB complex and as an ATP-driven molecular motor driving the stepwise translocation of polypeptide chains across the membrane. This Burkholderia ambifaria (strain ATCC BAA-244 / DSM 16087 / CCUG 44356 / LMG 19182 / AMMD) (Burkholderia cepacia (strain AMMD)) protein is Protein translocase subunit SecA.